Here is a 251-residue protein sequence, read N- to C-terminus: MNLISIPAFQDNYIWVLSENNGRCIIVDPGEAAPVLAAIEENQWQPEAILLTHHHQDHVGGVKQLREKFPSIVVYGPAETQDKGVTQVVGDGDRLSILGHDFSIFSTPGHTLGHICYYSEPYLFCGDTMFSGGCGRLFEGTAEQMYQSFMKINALPEETLICCAHEYTLANMKFALSILPDDRDINDYYHKVNELRAKKQKTLPVTLKNERRINLFLRVNDIDLIDKINKETNLQHSVARFAWLRSKKDDF.

His-53, His-55, Asp-57, His-58, His-110, Asp-127, and His-165 together coordinate Zn(2+).

The protein belongs to the metallo-beta-lactamase superfamily. Glyoxalase II family. In terms of assembly, monomer. Zn(2+) serves as cofactor.

The catalysed reaction is an S-(2-hydroxyacyl)glutathione + H2O = a 2-hydroxy carboxylate + glutathione + H(+). It participates in secondary metabolite metabolism; methylglyoxal degradation; (R)-lactate from methylglyoxal: step 2/2. Thiolesterase that catalyzes the hydrolysis of S-D-lactoyl-glutathione to form glutathione and D-lactic acid. The protein is Hydroxyacylglutathione hydrolase of Klebsiella pneumoniae subsp. pneumoniae (strain ATCC 700721 / MGH 78578).